Consider the following 366-residue polypeptide: 3-isopropylmalate dehydrogenase (366 aa).

Residue 76 to 89 (GPKWDANPSHLRPE) participates in NAD(+) binding. Residues Arg96, Arg106, Arg134, and Asp219 each coordinate substrate. Asp219, Asp243, and Asp247 together coordinate Mg(2+). 277–289 (GSAPDIAGKGIAN) is an NAD(+) binding site.

The protein belongs to the isocitrate and isopropylmalate dehydrogenases family. LeuB type 1 subfamily. Homodimer. The cofactor is Mg(2+). Mn(2+) serves as cofactor.

Its subcellular location is the cytoplasm. The catalysed reaction is (2R,3S)-3-isopropylmalate + NAD(+) = 4-methyl-2-oxopentanoate + CO2 + NADH. It functions in the pathway amino-acid biosynthesis; L-leucine biosynthesis; L-leucine from 3-methyl-2-oxobutanoate: step 3/4. Functionally, catalyzes the oxidation of 3-carboxy-2-hydroxy-4-methylpentanoate (3-isopropylmalate) to 3-carboxy-4-methyl-2-oxopentanoate. The product decarboxylates to 4-methyl-2 oxopentanoate. This chain is 3-isopropylmalate dehydrogenase, found in Oceanobacillus iheyensis (strain DSM 14371 / CIP 107618 / JCM 11309 / KCTC 3954 / HTE831).